Consider the following 236-residue polypeptide: Small ribosomal subunit protein uS2c (236 aa).

It belongs to the universal ribosomal protein uS2 family.

Its subcellular location is the plastid. It localises to the chloroplast. This is Small ribosomal subunit protein uS2c (rps2) from Draba nemorosa (Woodland whitlowgrass).